The following is a 250-amino-acid chain: Probable dihydroorotate dehydrogenase B (NAD(+)), electron transfer subunit (250 aa).

In terms of domain architecture, FAD-binding FR-type spans Met-1–Ile-89. Residues Cys-200, Cys-205, Cys-208, and Cys-216 each contribute to the [2Fe-2S] cluster site.

This sequence belongs to the PyrK family. Heterotetramer of 2 PyrK and 2 PyrD type B subunits. Requires [2Fe-2S] cluster as cofactor. FAD serves as cofactor.

The protein operates within pyrimidine metabolism; UMP biosynthesis via de novo pathway; orotate from (S)-dihydroorotate (NAD(+) route): step 1/1. Functionally, responsible for channeling the electrons from the oxidation of dihydroorotate from the FMN redox center in the PyrD type B subunit to the ultimate electron acceptor NAD(+). The polypeptide is Probable dihydroorotate dehydrogenase B (NAD(+)), electron transfer subunit (Thermoplasma acidophilum (strain ATCC 25905 / DSM 1728 / JCM 9062 / NBRC 15155 / AMRC-C165)).